Reading from the N-terminus, the 204-residue chain is MSIFEYNGSAVVAMVGKNCFAIASDRRLGVQLQTIATDFQRISKIHDRVFIGLSGLATDVQTLYQRLVFRHKLYQLREERDMKPETFASLVSAILYEKRFGPYLCQPVIAGLGDDDKPFICTMDSIGAKELAKDFVVSGTASESLYGACEAMYKPDMEAEELFETISQALLSSVDRDCLSGWGGHVYIVTPTEIKERILKGRMD.

Belongs to the peptidase T1B family. In terms of assembly, component of the 20S core complex of the 26S proteasome. The 26S proteasome is composed of a core protease (CP), known as the 20S proteasome, capped at one or both ends by the 19S regulatory particle (RP/PA700). The 20S proteasome core is composed of 28 subunits that are arranged in four stacked rings, resulting in a barrel-shaped structure. The two end rings are each formed by seven alpha subunits, and the two central rings are each formed by seven beta subunits. The catalytic chamber with the active sites is on the inside of the barrel.

The protein localises to the cytoplasm. Its subcellular location is the nucleus. Functionally, non-catalytic component of the proteasome, a multicatalytic proteinase complex which is characterized by its ability to cleave peptides with Arg, Phe, Tyr, Leu, and Glu adjacent to the leaving group at neutral or slightly basic pH. The proteasome has an ATP-dependent proteolytic activity. The polypeptide is Proteasome subunit beta type-3-A (PBC1) (Arabidopsis thaliana (Mouse-ear cress)).